The following is a 387-amino-acid chain: Probable tRNA sulfurtransferase (387 aa).

The THUMP domain occupies 67 to 167 (SLLKNLFTRL…KEHFLIISES (101 aa)). Residues 185-186 (LL), 210-211 (TF), Arg-269, Gly-287, and Gln-296 contribute to the ATP site.

The protein belongs to the ThiI family.

It localises to the cytoplasm. It carries out the reaction [ThiI sulfur-carrier protein]-S-sulfanyl-L-cysteine + a uridine in tRNA + 2 reduced [2Fe-2S]-[ferredoxin] + ATP + H(+) = [ThiI sulfur-carrier protein]-L-cysteine + a 4-thiouridine in tRNA + 2 oxidized [2Fe-2S]-[ferredoxin] + AMP + diphosphate. The catalysed reaction is [ThiS sulfur-carrier protein]-C-terminal Gly-Gly-AMP + S-sulfanyl-L-cysteinyl-[cysteine desulfurase] + AH2 = [ThiS sulfur-carrier protein]-C-terminal-Gly-aminoethanethioate + L-cysteinyl-[cysteine desulfurase] + A + AMP + 2 H(+). Its pathway is cofactor biosynthesis; thiamine diphosphate biosynthesis. Catalyzes the ATP-dependent transfer of a sulfur to tRNA to produce 4-thiouridine in position 8 of tRNAs, which functions as a near-UV photosensor. Also catalyzes the transfer of sulfur to the sulfur carrier protein ThiS, forming ThiS-thiocarboxylate. This is a step in the synthesis of thiazole, in the thiamine biosynthesis pathway. The sulfur is donated as persulfide by IscS. The sequence is that of Probable tRNA sulfurtransferase from Mycoplasma pneumoniae (strain ATCC 29342 / M129 / Subtype 1) (Mycoplasmoides pneumoniae).